The following is a 525-amino-acid chain: Ankyrin repeat domain-containing protein SOWAHC (525 aa).

Residues 84-263 are disordered; the sequence is CEGPSEPSGD…EESSGGGSVT (180 aa). Ser-88 is subject to Phosphoserine. The segment covering 101–112 has biased composition (low complexity); the sequence is AEPEAPDGPAGP. Ser-126, Ser-213, and Ser-226 each carry phosphoserine. The span at 230 to 241 shows a compositional bias: gly residues; that stretch reads SSGGGRGRGGGD. A compositionally biased stretch (low complexity) spans 242–251; sequence SDSASVASSS. 2 ANK repeats span residues 301 to 330 and 340 to 370; these read TGFT…KHQL and GGYT…DVDI. The segment at 434-525 is disordered; the sequence is DGGDHHHHHH…TLRPKSNVFG (92 aa). Residues 468 to 477 are compositionally biased toward basic residues; that stretch reads IKPRLNKIRF. Over residues 489-509 the composition is skewed to basic and acidic residues; the sequence is RDPEQPLEGRGEEGVGEERPV.

It belongs to the SOWAH family.

In Homo sapiens (Human), this protein is Ankyrin repeat domain-containing protein SOWAHC (SOWAHC).